The sequence spans 885 residues: Protein transport protein SEC24-1 (885 aa).

Zn(2+) is bound by residues Cys-164, Cys-167, Cys-186, and Cys-189. A zinc finger-like region spans residues 164 to 189 (CRRCRSYLNPFVAFIEQGRRWQCNIC). Residues 296-332 (DDYEESDDDDDEDDDDEEEDNEEEEEEEEDEEDDDDS) form a disordered region.

The protein belongs to the SEC23/SEC24 family. SEC24 subfamily. In terms of assembly, the COPII coat is composed of at least 5 proteins: the SEC23/24 complex, the SEC13/31 complex, and the protein SAR1. Golgi apparatus membrane; Peripheral membrane protein; Cytoplasmic side.

It localises to the cytoplasm. The protein resides in the cytoplasmic vesicle. It is found in the COPII-coated vesicle membrane. The protein localises to the endoplasmic reticulum membrane. Its subcellular location is the golgi apparatus membrane. In terms of biological role, component of the coat protein complex II (COPII) which promotes the formation of transport vesicles from the endoplasmic reticulum (ER). The coat has two main functions, the physical deformation of the endoplasmic reticulum membrane into vesicles and the selection of cargo molecules. This is Protein transport protein SEC24-1 (SEC241) from Saccharomyces uvarum (strain ATCC 76518 / CBS 7001 / CLIB 283 / NBRC 10550 / MCYC 623 / NCYC 2669 / NRRL Y-11845) (Yeast).